The sequence spans 192 residues: Adenylate kinase (192 aa).

ATP is bound at residue 10–15 (GAGKGT). Residues 30-59 (STGDMLREVIRRETEIGKKAKAMINAGTLV) are NMP. AMP is bound by residues Thr31, Arg36, 57–59 (TLV), 85–88 (GYPR), and Gln92. Residues 126-142 (KRVQETIIAGGQVRSDD) form an LID region. Arg127 is an ATP binding site. The AMP site is built by Arg139 and Arg150. Residue Ile178 participates in ATP binding.

It belongs to the adenylate kinase family. Monomer.

It localises to the cytoplasm. It carries out the reaction AMP + ATP = 2 ADP. The protein operates within purine metabolism; AMP biosynthesis via salvage pathway; AMP from ADP: step 1/1. Its function is as follows. Catalyzes the reversible transfer of the terminal phosphate group between ATP and AMP. Plays an important role in cellular energy homeostasis and in adenine nucleotide metabolism. This Bartonella henselae (strain ATCC 49882 / DSM 28221 / CCUG 30454 / Houston 1) (Rochalimaea henselae) protein is Adenylate kinase.